An 804-amino-acid chain; its full sequence is Leucine--tRNA ligase (804 aa).

The 'HIGH' region motif lies at Pro-39–His-50. The short motif at Lys-573–Ser-577 is the 'KMSKS' region element. Residue Lys-576 coordinates ATP.

The protein belongs to the class-I aminoacyl-tRNA synthetase family.

It localises to the cytoplasm. The catalysed reaction is tRNA(Leu) + L-leucine + ATP = L-leucyl-tRNA(Leu) + AMP + diphosphate. The polypeptide is Leucine--tRNA ligase (Lactobacillus delbrueckii subsp. bulgaricus (strain ATCC BAA-365 / Lb-18)).